The following is a 198-amino-acid chain: HTH-type transcriptional regulator BetI (198 aa).

The HTH tetR-type domain maps to 8-68; it reads PLRRRELIDA…ATMRHLLREL (61 aa). A DNA-binding region (H-T-H motif) is located at residues 31–50; it reads TVAQIAHEAGVSPALAHHYF.

It functions in the pathway amine and polyamine biosynthesis; betaine biosynthesis via choline pathway [regulation]. Functionally, repressor involved in the biosynthesis of the osmoprotectant glycine betaine. It represses transcription of the choline transporter BetT and the genes of BetAB involved in the synthesis of glycine betaine. The chain is HTH-type transcriptional regulator BetI from Brucella suis (strain ATCC 23445 / NCTC 10510).